The sequence spans 247 residues: Type II restriction enzyme SmaI (247 aa).

The cofactor is Mg(2+). K(+) serves as cofactor.

It catalyses the reaction Endonucleolytic cleavage of DNA to give specific double-stranded fragments with terminal 5'-phosphates.. Its function is as follows. A P subtype restriction enzyme that recognizes the double-stranded sequence 5'-CCCGGG-3' and cleaves after C-3. The protein is Type II restriction enzyme SmaI (smaIR) of Serratia marcescens.